The following is a 386-amino-acid chain: Aspartate carbamoyltransferase 1, chloroplastic (386 aa).

The transit peptide at 1-39 (MTVASMLSSNSMNVGVSNPKMSSKTSACCLLNRPWPSSC) directs the protein to the chloroplast. Carbamoyl phosphate contacts are provided by Arg-132 and Thr-133. Residues Arg-132 and Thr-133 each coordinate UMP. Lys-162 is a binding site for L-aspartate. The carbamoyl phosphate site is built by Arg-183, His-211, and Gln-214. UMP contacts are provided by Arg-183 and His-211. Residues Arg-244 and Arg-306 each contribute to the UMP site. Residues Arg-244 and Arg-306 each contribute to the L-aspartate site. Carbamoyl phosphate is bound by residues Leu-346 and Pro-347.

Belongs to the aspartate/ornithine carbamoyltransferase superfamily. ATCase family. Homotrimer.

The protein localises to the plastid. Its subcellular location is the chloroplast. The enzyme catalyses carbamoyl phosphate + L-aspartate = N-carbamoyl-L-aspartate + phosphate + H(+). It functions in the pathway pyrimidine metabolism; UMP biosynthesis via de novo pathway; (S)-dihydroorotate from bicarbonate: step 2/3. Its activity is regulated as follows. Feedback inhibited by UMP. In terms of biological role, catalyzes the condensation of carbamoyl phosphate and aspartate to form carbamoyl aspartate and inorganic phosphate, the committed step in the de novo pyrimidine nucleotide biosynthesis pathway. This Pisum sativum (Garden pea) protein is Aspartate carbamoyltransferase 1, chloroplastic (PYRB1).